Reading from the N-terminus, the 360-residue chain is Outer mitochondrial transmembrane helix translocase (360 aa).

The Mitochondrial intermembrane portion of the chain corresponds to 1–15 (MVHGEAFSRPLSRNE). A helical transmembrane segment spans residues 16–34 (VVGLIFRLTIFGAVTYFTI). The Cytoplasmic portion of the chain corresponds to 35–360 (KWMVDAIDPT…QNVLMHVSLD (326 aa)). Residue 133 to 140 (GPPGCGKT) coordinates ATP.

This sequence belongs to the AAA ATPase family. MSP1 subfamily.

It localises to the mitochondrion outer membrane. The protein localises to the peroxisome membrane. It is found in the postsynaptic cell membrane. It catalyses the reaction [protein]-with a C-terminal TM segment(out) + ATP + H2O = [protein]-with a C-terminal TM segment(in) + ADP + phosphate + H(+). Functionally, outer mitochondrial translocase required to remove mislocalized tail-anchored transmembrane proteins on mitochondria. Specifically recognizes and binds tail-anchored transmembrane proteins: acts as a dislocase that mediates the ATP-dependent extraction of mistargeted tail-anchored transmembrane proteins from the mitochondrion outer membrane. Also plays a critical role in regulating the surface expression of AMPA receptors (AMPAR), thereby regulating synaptic plasticity and learning and memory. In Xenopus tropicalis (Western clawed frog), this protein is Outer mitochondrial transmembrane helix translocase.